A 290-amino-acid chain; its full sequence is 4-hydroxybenzoate octaprenyltransferase (290 aa).

The next 8 membrane-spanning stretches (helical) occupy residues I24 to I44, V48 to N68, L98 to I118, F142 to I162, W171 to I191, F214 to E234, V239 to I259, and A270 to H290.

It belongs to the UbiA prenyltransferase family. Mg(2+) serves as cofactor.

The protein localises to the cell inner membrane. It catalyses the reaction all-trans-octaprenyl diphosphate + 4-hydroxybenzoate = 4-hydroxy-3-(all-trans-octaprenyl)benzoate + diphosphate. It functions in the pathway cofactor biosynthesis; ubiquinone biosynthesis. In terms of biological role, catalyzes the prenylation of para-hydroxybenzoate (PHB) with an all-trans polyprenyl group. Mediates the second step in the final reaction sequence of ubiquinone-8 (UQ-8) biosynthesis, which is the condensation of the polyisoprenoid side chain with PHB, generating the first membrane-bound Q intermediate 3-octaprenyl-4-hydroxybenzoate. The sequence is that of 4-hydroxybenzoate octaprenyltransferase from Blochmanniella pennsylvanica (strain BPEN).